The primary structure comprises 139 residues: Putative pre-16S rRNA nuclease (139 aa).

It belongs to the YqgF nuclease family.

It is found in the cytoplasm. Functionally, could be a nuclease involved in processing of the 5'-end of pre-16S rRNA. The sequence is that of Putative pre-16S rRNA nuclease from Thermoanaerobacter pseudethanolicus (strain ATCC 33223 / 39E) (Clostridium thermohydrosulfuricum).